Reading from the N-terminus, the 467-residue chain is ATP synthase subunit beta (467 aa).

ATP is bound at residue 152–159; it reads GGAGVGKT.

This sequence belongs to the ATPase alpha/beta chains family. In terms of assembly, F-type ATPases have 2 components, CF(1) - the catalytic core - and CF(0) - the membrane proton channel. CF(1) has five subunits: alpha(3), beta(3), gamma(1), delta(1), epsilon(1). CF(0) has three main subunits: a(1), b(2) and c(9-12). The alpha and beta chains form an alternating ring which encloses part of the gamma chain. CF(1) is attached to CF(0) by a central stalk formed by the gamma and epsilon chains, while a peripheral stalk is formed by the delta and b chains.

It localises to the cell membrane. The enzyme catalyses ATP + H2O + 4 H(+)(in) = ADP + phosphate + 5 H(+)(out). In terms of biological role, produces ATP from ADP in the presence of a proton gradient across the membrane. The catalytic sites are hosted primarily by the beta subunits. The chain is ATP synthase subunit beta from Caldicellulosiruptor bescii (strain ATCC BAA-1888 / DSM 6725 / KCTC 15123 / Z-1320) (Anaerocellum thermophilum).